Consider the following 254-residue polypeptide: Small ribosomal subunit protein uS3 (254 aa).

The KH type-2 domain maps to 39–109; sequence IRNYISARLK…EVKIDVIEVI (71 aa). The disordered stretch occupies residues 220-254; sequence EEMKKMQERRNDSRGRGRGDGRGAKRRRRPAAKKA. The span at 221–242 shows a compositional bias: basic and acidic residues; sequence EMKKMQERRNDSRGRGRGDGRG. Basic residues predominate over residues 243–254; sequence AKRRRRPAAKKA.

The protein belongs to the universal ribosomal protein uS3 family. Part of the 30S ribosomal subunit. Forms a tight complex with proteins S10 and S14.

Its function is as follows. Binds the lower part of the 30S subunit head. Binds mRNA in the 70S ribosome, positioning it for translation. This is Small ribosomal subunit protein uS3 from Chlorobaculum parvum (strain DSM 263 / NCIMB 8327) (Chlorobium vibrioforme subsp. thiosulfatophilum).